Here is a 173-residue protein sequence, read N- to C-terminus: Large ribosomal subunit protein uL10 (173 aa).

Belongs to the universal ribosomal protein uL10 family. In terms of assembly, part of the ribosomal stalk of the 50S ribosomal subunit. The N-terminus interacts with L11 and the large rRNA to form the base of the stalk. The C-terminus forms an elongated spine to which L12 dimers bind in a sequential fashion forming a multimeric L10(L12)X complex.

In terms of biological role, forms part of the ribosomal stalk, playing a central role in the interaction of the ribosome with GTP-bound translation factors. The protein is Large ribosomal subunit protein uL10 (rplJ) of Synechocystis sp. (strain ATCC 27184 / PCC 6803 / Kazusa).